The primary structure comprises 151 residues: MMTEEHTDLEARIIKDIHCKEIDLVNRDPKNINEDIVKVDFEDVIAEPEGTYSFDGVWKVSFTTFTVSKYWCYRLLSTLLGVPLALLWGFLFACISFCHIWAVVPCIKSYLIEIQCISHIYSLCIRTFCNPLFAALGQVCSNIKVVLRREG.

The Cytoplasmic portion of the chain corresponds to 1 to 83 (MMTEEHTDLE…RLLSTLLGVP (83 aa)). Lys38 participates in a covalent cross-link: Glycyl lysine isopeptide (Lys-Gly) (interchain with G-Cter in SUMO3). The segment at 64–114 (TFTVSKYWCYRLLSTLLGVPLALLWGFLFACISFCHIWAVVPCIKSYLIEI) is required for interaction with DAG1. The helical intramembrane region spans 84-104 (LALLWGFLFACISFCHIWAVV). Over 105 to 151 (PCIKSYLIEIQCISHIYSLCIRTFCNPLFAALGQVCSNIKVVLRREG) the chain is Cytoplasmic.

It belongs to the caveolin family. In terms of assembly, homooligomer. Interacts with DYSF. Interacts with DLG1 and KCNA5; forms a ternary complex. Interacts with DAG1 (via its C-terminal); the interaction prevents binding of DAG1 with DMD. Interacts with TRIM72. Interacts with MUSK; may regulate MUSK signaling. Interacts with POPDC1. Interacts with CAVIN1, CAVIN2 and CAVIN4. In terms of processing, sumoylation with SUMO3 by PIAS4 may reduce agonist-induced internalization and desensitization of adrenergic receptor ABRD2. In terms of tissue distribution, expressed predominantly in muscle.

The protein localises to the golgi apparatus membrane. Its subcellular location is the cell membrane. It localises to the membrane. The protein resides in the caveola. It is found in the sarcolemma. Its function is as follows. May act as a scaffolding protein within caveolar membranes. Interacts directly with G-protein alpha subunits and can functionally regulate their activity. May also regulate voltage-gated potassium channels. Plays a role in the sarcolemma repair mechanism of both skeletal muscle and cardiomyocytes that permits rapid resealing of membranes disrupted by mechanical stress. Mediates the recruitment of CAVIN2 and CAVIN3 proteins to the caveolae. The protein is Caveolin-3 of Mus musculus (Mouse).